The chain runs to 292 residues: Aquaporin-3 (292 aa).

The Cytoplasmic portion of the chain corresponds to 1-24 (MGRQKELMNRCGEMLHIRYRLLRQ). The chain crosses the membrane as a helical span at residues 25–42 (ALAECLGTLILVMFGCGS). The Extracellular segment spans residues 43–56 (VAQVVLSRGTHGGF). A helical membrane pass occupies residues 57 to 74 (LTINLAFGFAVTLGILVA). Residues 75–78 (GQVS) lie on the Cytoplasmic side of the membrane. The segment at residues 79-92 (GAHLNPAVTFAMCF) is an intramembrane region (discontinuously helical). The NPA 1 motif lies at 83 to 85 (NPA). The Cytoplasmic segment spans residues 93–100 (LAREPWIK). Residues 101-121 (LPIYALAQTLGAFLGAGIVFG) form a helical membrane-spanning segment. Over 122 to 159 (LYYDAIWAFANNELFVSGPNGTAGIFATYPSGHLDMVN) the chain is Extracellular. N-linked (GlcNAc...) asparagine glycosylation occurs at N141. The helical transmembrane segment at 160-177 (GFFDQFIGTAALIVCVLA) threads the bilayer. At 178–189 (IVDPYNNPVPRG) the chain is on the cytoplasmic side. The helical transmembrane segment at 190–206 (LEAFTVGLVVLVIGTSM) threads the bilayer. Topologically, residues 207 to 210 (GFNS) are extracellular. The segment at residues 211-224 (GYAVNPARDFGPRL) is an intramembrane region (discontinuously helical). Residues 215–217 (NPA) carry the NPA 2 motif. The Extracellular portion of the chain corresponds to 225–242 (FTALAGWGSEVFTTGRHW). A helical membrane pass occupies residues 243–264 (WWVPIVSPLLGSIAGVFVYQLM). Residues 265-292 (IGCHLEQPPPSTEEENVKLAHMKHKEQI) are Cytoplasmic-facing.

The protein belongs to the MIP/aquaporin (TC 1.A.8) family. Homotetramer; each monomer provides an independent glycerol/water pore. Could also exist in other oligomeric states. Detected in principal cells in collecting ducts in kidney medulla (at protein level). Renal medulla and colon. Predominantly in the inner medulla. Expressed in basal layer of epidermal keratinocytes.

It localises to the cell membrane. It is found in the basolateral cell membrane. It catalyses the reaction glycerol(in) = glycerol(out). The catalysed reaction is H2O(in) = H2O(out). It carries out the reaction urea(in) = urea(out). The enzyme catalyses H2O2(out) = H2O2(in). Functionally, aquaglyceroporins form homotetrameric transmembrane channels, with each monomer independently mediating glycerol and water transport across the plasma membrane along their osmotic gradient. Could also be permeable to urea. Also participates in cell permeability to H2O2 and H2O2-mediated signaling. In skin, transports glycerol to the epidermis and stratum corneum, where it maintains hydration, elasticity, and supports lipid biosynthesis for barrier repair. In kidney, contributes to the reabsorption of water, helping the body maintain proper fluid balance. The sequence is that of Aquaporin-3 from Mus musculus (Mouse).